The sequence spans 283 residues: S-methyl-5'-thioadenosine phosphorylase (283 aa).

Thr-18 is a binding site for phosphate. Position 51 is an N6-acetyllysine (Lys-51). Residues 60-61 (RH) and 93-94 (TA) contribute to the phosphate site. Met-196 contributes to the substrate binding site. Phosphate is bound at residue Thr-197. 220–222 (DYD) provides a ligand contact to substrate.

The protein belongs to the PNP/MTAP phosphorylase family. MTAP subfamily. In terms of assembly, homotrimer. In terms of tissue distribution, ubiquitously expressed.

It is found in the cytoplasm. The protein resides in the nucleus. The catalysed reaction is S-methyl-5'-thioadenosine + phosphate = 5-(methylsulfanyl)-alpha-D-ribose 1-phosphate + adenine. It functions in the pathway amino-acid biosynthesis; L-methionine biosynthesis via salvage pathway; S-methyl-5-thio-alpha-D-ribose 1-phosphate from S-methyl-5'-thioadenosine (phosphorylase route): step 1/1. Its activity is regulated as follows. Inhibited by 5'-methylthiotubercin and 5'-chloroformycin. Functionally, catalyzes the reversible phosphorylation of S-methyl-5'-thioadenosine (MTA) to adenine and 5-methylthioribose-1-phosphate. Involved in the breakdown of MTA, a major by-product of polyamine biosynthesis. Responsible for the first step in the methionine salvage pathway after MTA has been generated from S-adenosylmethionine. Has broad substrate specificity with 6-aminopurine nucleosides as preferred substrates. The polypeptide is S-methyl-5'-thioadenosine phosphorylase (Homo sapiens (Human)).